A 290-amino-acid chain; its full sequence is MFRFNPQLSHGCALALICCLLNLLMMHQPTNAELSPVVQGEFFLPILPDDHPPNTDTSFGGPISNLYDNLLQREYAGPVVFPNHQVERKAQRSPSLRLRFGRSDPDMLNNIVEKRWFGDVNQKPIRSPSLRLRFGRRDPTLPQMRRTAYDDLLERELTLNNQQQQQLGDTADDLSADYDGLYERVVRKPQRLRWGRSVPQFEATIGDNDQLYNSLWNSEKMRRMLLALQQYEAAPGHVAGYANDGDDTEAQLDEDTSEFQREARKPMRLRWGRSTGKAPQIETSSIAPKN.

An N-terminal signal peptide occupies residues 1 to 32 (MFRFNPQLSHGCALALICCLLNLLMMHQPTNA). A propeptide spanning residues 33-87 (ELSPVVQGEFFLPILPDDHPPNTDTSFGGPISNLYDNLLQREYAGPVVFPNHQVE) is cleaved from the precursor. Phenylalanine amide is present on residues Phe-100 and Phe-134. A propeptide spanning residues 138–290 (DPTLPQMRRT…IETSSIAPKN (153 aa)) is cleaved from the precursor. The tract at residues 238–290 (VAGYANDGDDTEAQLDEDTSEFQREARKPMRLRWGRSTGKAPQIETSSIAPKN) is disordered. The segment covering 244-257 (DGDDTEAQLDEDTS) has biased composition (acidic residues). Residues 281 to 290 (IETSSIAPKN) show a composition bias toward polar residues.

It belongs to the NPY family.

It localises to the secreted. Functionally, plays a role in controlling food intake and regulating body size. This is Short neuropeptide F from Drosophila pseudoobscura pseudoobscura (Fruit fly).